Reading from the N-terminus, the 395-residue chain is Succinyl-diaminopimelate desuccinylase (395 aa).

His74 contacts Zn(2+). Asp76 is a catalytic residue. Asp107 contributes to the Zn(2+) binding site. Catalysis depends on Glu141, which acts as the Proton acceptor. Zn(2+) is bound by residues Glu142, Glu170, and His368.

This sequence belongs to the peptidase M20A family. DapE subfamily. Homodimer. It depends on Zn(2+) as a cofactor. Co(2+) is required as a cofactor.

The enzyme catalyses N-succinyl-(2S,6S)-2,6-diaminopimelate + H2O = (2S,6S)-2,6-diaminopimelate + succinate. It functions in the pathway amino-acid biosynthesis; L-lysine biosynthesis via DAP pathway; LL-2,6-diaminopimelate from (S)-tetrahydrodipicolinate (succinylase route): step 3/3. Functionally, catalyzes the hydrolysis of N-succinyl-L,L-diaminopimelic acid (SDAP), forming succinate and LL-2,6-diaminopimelate (DAP), an intermediate involved in the bacterial biosynthesis of lysine and meso-diaminopimelic acid, an essential component of bacterial cell walls. In Brucella canis (strain ATCC 23365 / NCTC 10854 / RM-666), this protein is Succinyl-diaminopimelate desuccinylase.